The sequence spans 135 residues: Basic phospholipase A2 10 (135 aa).

7 disulfides stabilise this stretch: C28–C87, C42–C134, C44–C60, C59–C115, C66–C108, C76–C101, and C94–C106. The Ca(2+) site is built by Y43, G45, and G47. H63 is a catalytic residue. D64 serves as a coordination point for Ca(2+). D109 is a catalytic residue.

The protein belongs to the phospholipase A2 family. Group I subfamily. D49 sub-subfamily. The cofactor is Ca(2+). Expressed by the venom gland.

It localises to the secreted. It carries out the reaction a 1,2-diacyl-sn-glycero-3-phosphocholine + H2O = a 1-acyl-sn-glycero-3-phosphocholine + a fatty acid + H(+). Its function is as follows. Snake venom phospholipase A2 (PLA2) that inhibits neuromuscular transmission by blocking acetylcholine release from the nerve termini. PLA2 catalyzes the calcium-dependent hydrolysis of the 2-acyl groups in 3-sn-phosphoglycerides. In Bungarus fasciatus (Banded krait), this protein is Basic phospholipase A2 10.